An 835-amino-acid chain; its full sequence is Toll-like receptor 4 (835 aa).

An N-terminal signal peptide occupies residues 1 to 25 (MMPLLHLAGTLIMALFLSCLRPGSL). At 26–638 (NPCIEVLPNI…KTIISVSVVS (613 aa)) the chain is on the extracellular side. A disulfide bridge links Cys28 with Cys39. Asn34, Asn43, and Asn75 each carry an N-linked (GlcNAc...) asparagine glycan. LRR repeat units lie at residues 54-75 (STKN…SFTN), 78-99 (QLQW…AWHG), 102-123 (QLST…SFSG), 126-147 (NLEN…HIGQ), and 150-171 (SLKK…EYFS). Residue Asn172 is glycosylated (N-linked (GlcNAc...) asparagine). LRR repeat units lie at residues 175–198 (NLEH…QFLR), 204–224 (NLSL…AFQG), and 226–247 (RLHE…MCLQ). N-linked (GlcNAc...) asparagine glycosylation is found at Asn204, Asn237, Asn248, Asn281, and Asn307. A disulfide bridge links Cys280 with Cys304. One copy of the LRR 9 repeat lies at 372-381 (SLRYLDLSRN). Cys388 and Cys389 are disulfide-bonded. LRR repeat units follow at residues 398-420 (NLKY…MGLE), 421-442 (ELEY…SVFL), 446-467 (KLLY…IFLG), and 470-491 (SLNT…NVFT). Residues Asn492, Asn495, and Asn524 are each glycosylated (N-linked (GlcNAc...) asparagine). LRR repeat units follow at residues 495-516 (NLTF…VFDT), 519-540 (RLQL…HYKQ), and 543-564 (SLRT…LQHF). N-linked (GlcNAc...) asparagine glycans are attached at residues Asn572 and Asn575. In terms of domain architecture, LRRCT spans 576 to 627 (NSVACICEYQNFLQWVKDQKMFLVNVEQMKCASPIDMKASLVLDFTNSTCYI). 2 disulfides stabilise this stretch: Cys580–Cys606 and Cys582–Cys625. Asn622 is a glycosylation site (N-linked (GlcNAc...) asparagine). A helical membrane pass occupies residues 639 to 659 (VLVVATVAFLIYHFYFHLILI). Over 660–835 (AGCKKYSRGE…EEEQEATTLT (176 aa)) the chain is Cytoplasmic. The 144-residue stretch at 670-813 (SIYDAFVIYS…IFWRRLKKAL (144 aa)) folds into the TIR domain.

The protein belongs to the Toll-like receptor family. As to quaternary structure, belongs to the lipopolysaccharide (LPS) receptor, a multi-protein complex containing at least CD14, LY96 and TLR4. Binding to bacterial LPS leads to homodimerization. Interacts with LY96 via the extracellular domain. Interacts with MYD88 and TIRAP via their respective TIR domains. Interacts with TICAM2. Interacts with NOX4. Interacts with CNPY3 and HSP90B1; this interaction is required for proper folding in the endoplasmic reticulum. Interacts with MAP3K21; this interaction leads to negative regulation of TLR4 signaling. Interacts with CD36, following CD36 stimulation by oxLDL or amyloid-beta 42, and forms a heterodimer with TLR6. The trimeric complex is internalized and triggers inflammatory response. LYN kinase activity facilitates TLR4-TLR6 heterodimerization and signal initiation. Interacts with TICAM1 in response to LPS in a WDFY1-dependent manner. Interacts with WDFY1 in response to LPS. Interacts with SMPDL3B. Interacts with CEACAM1; upon lipopolysaccharide stimulation, forms a complex including TLR4 and the phosphorylated form of SYK and CEACAM1, which in turn, recruits PTPN6 that dephosphorylates SYK, reducing the production of reactive oxygen species (ROS) and lysosome disruption, which in turn, reduces the activity of the inflammasome. Interacts with RFTN1; the interaction occurs in response to lipopolysaccharide stimulation. Interacts with SCIMP; the interaction occurs in response to lipopolysaccharide stimulation and is enhanced by phosphorylation of SCIMP by LYN. This interaction facilitates the phosphorylation of TLR4 by LYN which elicits a selective cytokine response in macrophages. Interacts with TRAF3IP3. Interacts with TREM1; this interaction enhances TLR4-mediated inflammatory response. Interacts with ZG16B/PAUF. Interacts with CD82; this interaction inhibits TLR4-mediated signaling pathway. Phosphorylated on tyrosine residues by LYN after binding lipopolysaccharide. In terms of processing, ubiquitinated by RNF128 via 'Lys-28'-linked polyubiquitin chains, leading to proteasomal degradation.

It is found in the cell membrane. It localises to the early endosome. Its subcellular location is the cell projection. The protein resides in the ruffle. In terms of biological role, transmembrane receptor that functions as a pattern recognition receptor recognizing pathogen- and damage-associated molecular patterns (PAMPs and DAMPs) to induce innate immune responses via downstream signaling pathways. At the plasma membrane, cooperates with LY96 to mediate the innate immune response to bacterial lipopolysaccharide (LPS). Also involved in LPS-independent inflammatory responses triggered by free fatty acids, such as palmitate, and Ni(2+). Mechanistically, acts via MYD88, TIRAP and TRAF6, leading to NF-kappa-B activation, cytokine secretion and the inflammatory response. Alternatively, CD14-mediated TLR4 internalization via endocytosis is associated with the initiation of a MYD88-independent signaling via the TICAM1-TBK1-IRF3 axis leading to type I interferon production. In addition to the secretion of proinflammatory cytokines, initiates the activation of NLRP3 inflammasome and formation of a positive feedback loop between autophagy and NF-kappa-B signaling cascade. In complex with TLR6, promotes inflammation in monocytes/macrophages by associating with TLR6 and the receptor CD86. Upon ligand binding, such as oxLDL or amyloid-beta 42, the TLR4:TLR6 complex is internalized and triggers inflammatory response, leading to NF-kappa-B-dependent production of CXCL1, CXCL2 and CCL9 cytokines, via MYD88 signaling pathway, and CCL5 cytokine, via TICAM1 signaling pathway. In myeloid dendritic cells, vesicular stomatitis virus glycoprotein G but not LPS promotes the activation of IRF7, leading to type I IFN production in a CD14-dependent manner. This Rattus norvegicus (Rat) protein is Toll-like receptor 4 (Tlr4).